A 347-amino-acid chain; its full sequence is Terpene synthase 2 (347 aa).

Mg(2+)-binding residues include D103, N247, S251, and E255. Positions 103-107 (DDLLE) match the D(D/E)XX(D/E) motif motif. The NSE motif motif lies at 247 to 255 (NDIFSLKKE). Residues 329-336 (WCSKSTRY) carry the WxxxxxRY motif motif.

This sequence belongs to the terpene synthase family. Mg(2+) is required as a cofactor.

Terpene synthase that may be involved in the production of volatile terpenoids. Does not show detectable terpene products with either farnesyl diphosphate (FPP) or geranyl diphosphate (GPP). P.polycephalum has a unique biology and these volatile terpenoids could function in internal communication of P.polycephalum, to mark the territory that have been explored, or they may be involved in chemotaxis. In Physarum polycephalum (Slime mold), this protein is Terpene synthase 2.